The sequence spans 344 residues: Selenide, water dikinase (344 aa).

Residue Cys16 is part of the active site. Residues Lys19 and 47-49 (SRD) contribute to the ATP site. Residue Asp50 participates in Mg(2+) binding. ATP contacts are provided by residues Asp67, Asp90, and 138–140 (GHS). Asp90 serves as a coordination point for Mg(2+). A Mg(2+)-binding site is contributed by Asp226.

Belongs to the selenophosphate synthase 1 family. Class I subfamily. Homodimer. The cofactor is Mg(2+).

The enzyme catalyses hydrogenselenide + ATP + H2O = selenophosphate + AMP + phosphate + 2 H(+). Synthesizes selenophosphate from selenide and ATP. This Bordetella bronchiseptica (strain ATCC BAA-588 / NCTC 13252 / RB50) (Alcaligenes bronchisepticus) protein is Selenide, water dikinase.